Here is a 134-residue protein sequence, read N- to C-terminus: ATP synthase epsilon chain (134 aa).

The protein belongs to the ATPase epsilon chain family. As to quaternary structure, F-type ATPases have 2 components, CF(1) - the catalytic core - and CF(0) - the membrane proton channel. CF(1) has five subunits: alpha(3), beta(3), gamma(1), delta(1), epsilon(1). CF(0) has three main subunits: a, b and c.

It localises to the cell membrane. Produces ATP from ADP in the presence of a proton gradient across the membrane. This Clostridium botulinum (strain Eklund 17B / Type B) protein is ATP synthase epsilon chain.